A 379-amino-acid polypeptide reads, in one-letter code: Transcription factor TIP2 (379 aa).

The segment at 144-184 is disordered; that stretch reads MVGPFESSPTPRSGGGRKRSRATAGFHGGGPANGVEKKEKQ. The basic motif; degenerate stretch occupies residues 173–186; the sequence is GPANGVEKKEKQRR. The 50-residue stretch at 173–222 folds into the bHLH domain; sequence GPANGVEKKEKQRRLRLTEKYNALMLLIPNRTKEDRATVISDAIEYIQEL. The tract at residues 187 to 222 is helix-loop-helix motif; the sequence is LRLTEKYNALMLLIPNRTKEDRATVISDAIEYIQEL.

The protein belongs to the bHLH protein family. As to quaternary structure, homodimer. Interacts with TDR, but not with EAT1. In terms of tissue distribution, highly expressed in anthers; strong expression in the middle layer and tapetum, and weak expression in the endothecium.

Its subcellular location is the nucleus. Transcription factor that binds to the E-box-containing promoter regions of the transcription factors TDR and EAT1, activating their expression. May have a role in specifying the cell pattern of the inner anther walls and functioning in meiosis progression. Required for male reproduction. Acts downstream of UDT1 and GAMYB, but upstream of TDR1 and EAT1 in pollen development. This chain is Transcription factor TIP2 (TIP2), found in Oryza sativa subsp. japonica (Rice).